Consider the following 401-residue polypeptide: Phosphoglycerate kinase 3, cytosolic (401 aa).

Residues Val24, Asp25, Asn27, Arg41, Ser63, His64, Gly66, Arg67, Arg122, His154, and Arg155 each contribute to the (2R)-3-phosphoglycerate site. Gly200 contributes to the ADP binding site. Residue Gly200 participates in CDP binding. Positions 202 and 206 each coordinate AMP. An ATP-binding site is contributed by Lys206. Gly224 is a binding site for ADP. Gly224 serves as a coordination point for CDP. AMP is bound by residues Gly225 and Gly297. Residues Gly225, Gly297, and Asn321 each contribute to the ATP site. Positions 322 and 327 each coordinate CDP. Position 327 (Phe327) interacts with ADP. Glu328 lines the AMP pocket. Residues Glu328, Asp359, and Ser360 each coordinate ATP. A Mg(2+)-binding site is contributed by Asp359.

This sequence belongs to the phosphoglycerate kinase family. In terms of assembly, monomer. Mg(2+) is required as a cofactor. As to expression, expressed in roots, leaves and inflorescence.

The protein localises to the cytoplasm. It carries out the reaction (2R)-3-phosphoglycerate + ATP = (2R)-3-phospho-glyceroyl phosphate + ADP. It participates in carbohydrate degradation; glycolysis; pyruvate from D-glyceraldehyde 3-phosphate: step 2/5. The protein is Phosphoglycerate kinase 3, cytosolic of Arabidopsis thaliana (Mouse-ear cress).